Here is a 475-residue protein sequence, read N- to C-terminus: Ribulose bisphosphate carboxylase large chain (475 aa).

A propeptide spanning residues 1–2 (MS) is cleaved from the precursor. An N-acetylproline modification is found at Pro3. Lys14 carries the post-translational modification N6,N6,N6-trimethyllysine. Substrate-binding residues include Asn123 and Thr173. Lys175 functions as the Proton acceptor in the catalytic mechanism. Position 177 (Lys177) interacts with substrate. Mg(2+) contacts are provided by Lys201, Asp203, and Glu204. Lys201 carries the N6-carboxylysine modification. The Proton acceptor role is filled by His294. 3 residues coordinate substrate: Arg295, His327, and Ser379.

The protein belongs to the RuBisCO large chain family. Type I subfamily. In terms of assembly, heterohexadecamer of 8 large chains and 8 small chains; disulfide-linked. The disulfide link is formed within the large subunit homodimers. It depends on Mg(2+) as a cofactor. In terms of processing, the disulfide bond which can form in the large chain dimeric partners within the hexadecamer appears to be associated with oxidative stress and protein turnover.

Its subcellular location is the plastid. It is found in the chloroplast. It carries out the reaction 2 (2R)-3-phosphoglycerate + 2 H(+) = D-ribulose 1,5-bisphosphate + CO2 + H2O. The enzyme catalyses D-ribulose 1,5-bisphosphate + O2 = 2-phosphoglycolate + (2R)-3-phosphoglycerate + 2 H(+). Functionally, ruBisCO catalyzes two reactions: the carboxylation of D-ribulose 1,5-bisphosphate, the primary event in carbon dioxide fixation, as well as the oxidative fragmentation of the pentose substrate in the photorespiration process. Both reactions occur simultaneously and in competition at the same active site. In Cucumis sativus (Cucumber), this protein is Ribulose bisphosphate carboxylase large chain (rbcL).